Consider the following 453-residue polypeptide: Cytochrome b-c1 complex subunit 2, mitochondrial (453 aa).

A mitochondrion-targeting transit peptide spans 1–14 (MKLLTRAGSFSRFY). N6-acetyllysine occurs at positions 66, 199, and 250.

This sequence belongs to the peptidase M16 family. UQCRC2/QCR2 subfamily. In terms of assembly, component of the ubiquinol-cytochrome c oxidoreductase (cytochrome b-c1 complex, complex III, CIII), a multisubunit enzyme composed of 11 subunits. The complex is composed of 3 respiratory subunits cytochrome b, cytochrome c1 and Rieske protein UQCRFS1, 2 core protein subunits UQCRC1/QCR1 and UQCRC2/QCR2, and 6 low-molecular weight protein subunits UQCRH/QCR6, UQCRB/QCR7, UQCRQ/QCR8, UQCR10/QCR9, UQCR11/QCR10 and subunit 9, the cleavage product of Rieske protein UQCRFS1. The complex exists as an obligatory dimer and forms supercomplexes (SCs) in the inner mitochondrial membrane with NADH-ubiquinone oxidoreductase (complex I, CI) and cytochrome c oxidase (complex IV, CIV), resulting in different assemblies (supercomplex SCI(1)III(2)IV(1) and megacomplex MCI(2)III(2)IV(2)). Interacts with RAB5IF. Interacts with STMP1.

It localises to the mitochondrion inner membrane. Functionally, component of the ubiquinol-cytochrome c oxidoreductase, a multisubunit transmembrane complex that is part of the mitochondrial electron transport chain which drives oxidative phosphorylation. The respiratory chain contains 3 multisubunit complexes succinate dehydrogenase (complex II, CII), ubiquinol-cytochrome c oxidoreductase (cytochrome b-c1 complex, complex III, CIII) and cytochrome c oxidase (complex IV, CIV), that cooperate to transfer electrons derived from NADH and succinate to molecular oxygen, creating an electrochemical gradient over the inner membrane that drives transmembrane transport and the ATP synthase. The cytochrome b-c1 complex catalyzes electron transfer from ubiquinol to cytochrome c, linking this redox reaction to translocation of protons across the mitochondrial inner membrane, with protons being carried across the membrane as hydrogens on the quinol. In the process called Q cycle, 2 protons are consumed from the matrix, 4 protons are released into the intermembrane space and 2 electrons are passed to cytochrome c. The 2 core subunits UQCRC1/QCR1 and UQCRC2/QCR2 are homologous to the 2 mitochondrial-processing peptidase (MPP) subunits beta-MPP and alpha-MPP respectively, and they seem to have preserved their MPP processing properties. May be involved in the in situ processing of UQCRFS1 into the mature Rieske protein and its mitochondrial targeting sequence (MTS)/subunit 9 when incorporated into complex III. This Homo sapiens (Human) protein is Cytochrome b-c1 complex subunit 2, mitochondrial (UQCRC2).